The chain runs to 197 residues: Holliday junction branch migration complex subunit RuvA (197 aa).

The interval Met-1–Leu-64 is domain I. A domain II region spans residues Thr-65–Gly-143. The tract at residues Thr-144–Leu-152 is flexible linker. Positions Leu-152–Ile-197 are domain III.

Belongs to the RuvA family. Homotetramer. Forms an RuvA(8)-RuvB(12)-Holliday junction (HJ) complex. HJ DNA is sandwiched between 2 RuvA tetramers; dsDNA enters through RuvA and exits via RuvB. An RuvB hexamer assembles on each DNA strand where it exits the tetramer. Each RuvB hexamer is contacted by two RuvA subunits (via domain III) on 2 adjacent RuvB subunits; this complex drives branch migration. In the full resolvosome a probable DNA-RuvA(4)-RuvB(12)-RuvC(2) complex forms which resolves the HJ.

The protein localises to the cytoplasm. The RuvA-RuvB-RuvC complex processes Holliday junction (HJ) DNA during genetic recombination and DNA repair, while the RuvA-RuvB complex plays an important role in the rescue of blocked DNA replication forks via replication fork reversal (RFR). RuvA specifically binds to HJ cruciform DNA, conferring on it an open structure. The RuvB hexamer acts as an ATP-dependent pump, pulling dsDNA into and through the RuvAB complex. HJ branch migration allows RuvC to scan DNA until it finds its consensus sequence, where it cleaves and resolves the cruciform DNA. The polypeptide is Holliday junction branch migration complex subunit RuvA (Caldicellulosiruptor saccharolyticus (strain ATCC 43494 / DSM 8903 / Tp8T 6331)).